Reading from the N-terminus, the 152-residue chain is Small ribosomal subunit protein uS15 (152 aa).

The span at M1–K11 shows a compositional bias: basic residues. The interval M1–P23 is disordered.

The protein belongs to the universal ribosomal protein uS15 family. Part of the 30S ribosomal subunit.

The polypeptide is Small ribosomal subunit protein uS15 (Methanosarcina acetivorans (strain ATCC 35395 / DSM 2834 / JCM 12185 / C2A)).